Consider the following 319-residue polypeptide: MINTNNYRIIAKRVISSATSALETLSNNIPSDFNRIIEFLLSFKGRIILTGIGKSGYIARKIAASFSSTGMPSFYLHPAEASHGDLGMITRNDLVMMLSNSGETKELFNIIEYCNNSSIKIAAMTMNKNSTLAKRSDFLLKIPECQEASLIGTPTISSLIMLSLGDAIMTVIHEERGFTRDDFKIYHPGGTIGANLTKIKNIMRSGDEIPLVYEDTSFTETIIIMNKKRLGCTLVTDKEQNLIGIITDGDLRRNIHDQIHLKTASSIMTKNPHYISSEIFAQEALNLMKAKNITNIPIVDDNIIIGIIHIHDLLSMGVS.

In terms of domain architecture, SIS spans 36-178 (IIEFLLSFKG…MTVIHEERGF (143 aa)). 51–56 (GIGKSG) contacts ATP. CBS domains are found at residues 203–263 (MRSG…HLKT) and 268–319 (MTKN…MGVS).

Belongs to the SIS family. GutQ/KpsF subfamily.

This is an uncharacterized protein from Rickettsia prowazekii (strain Madrid E).